Reading from the N-terminus, the 1157-residue chain is ATP-dependent helicase/deoxyribonuclease subunit B (1157 aa).

The 299-residue stretch at Met-1–Arg-299 folds into the UvrD-like helicase ATP-binding domain. Gly-8 to Thr-15 contacts ATP. In terms of domain architecture, UvrD-like helicase C-terminal spans Gly-279–Asn-590. [4Fe-4S] cluster-binding residues include Cys-792, Cys-1112, Cys-1115, and Cys-1121.

The protein belongs to the helicase family. AddB/RexB type 1 subfamily. As to quaternary structure, heterodimer of AddA and AddB. Requires Mg(2+) as cofactor. The cofactor is [4Fe-4S] cluster.

Its function is as follows. The heterodimer acts as both an ATP-dependent DNA helicase and an ATP-dependent, dual-direction single-stranded exonuclease. Recognizes the chi site generating a DNA molecule suitable for the initiation of homologous recombination. The AddB subunit has 5' -&gt; 3' nuclease activity but not helicase activity. The protein is ATP-dependent helicase/deoxyribonuclease subunit B of Pelotomaculum thermopropionicum (strain DSM 13744 / JCM 10971 / SI).